We begin with the raw amino-acid sequence, 900 residues long: Nitrate reductase [NADH] (900 aa).

Cys-172 contributes to the Mo-molybdopterin binding site. The Cytochrome b5 heme-binding domain occupies 521–596; sequence TKMYSLSEVK…LEDYRVGELI (76 aa). Heme-binding residues include His-556 and His-579. Positions 644–756 constitute an FAD-binding FR-type domain; it reads REKIPCKLIS…KGPLGHIEYT (113 aa). FAD is bound by residues 696-699, 713-717, Phe-718, Phe-725, 730-732, and Thr-783; these read RAYT, VVKVY, and AMS.

The protein belongs to the nitrate reductase family. In terms of assembly, homodimer. Requires FAD as cofactor. The cofactor is heme. Mo-molybdopterin serves as cofactor.

It carries out the reaction nitrite + NAD(+) + H2O = nitrate + NADH + H(+). Its function is as follows. Nitrate reductase is a key enzyme involved in the first step of nitrate assimilation in plants, fungi and bacteria. The chain is Nitrate reductase [NADH] (NIA) from Lotus japonicus (Lotus corniculatus var. japonicus).